A 325-amino-acid polypeptide reads, in one-letter code: Reaction center protein M chain (325 aa).

The next 3 membrane-spanning stretches (helical) occupy residues 54–80 (LGPLGILSIVFGSLAIMIIGFNMLASV), 111–140 (NDGGWWLMAGLFLTISILLWWVRMYTRARA), and 143–168 (MGTHVAWAFAAAIWLYLVLGFIRPVL). Residues H183 and H203 each coordinate (7R,8Z)-bacteriochlorophyll b. The helical transmembrane segment at 198–226 (FYNPFHALSIAFLYGATLLFAMHGATILA) threads the bilayer. Residues H220 and E235 each coordinate Fe cation. Position 253 (W253) interacts with a ubiquinone. The helical transmembrane segment at 260–286 (NATTESIHRWAWWFAVLCPLCGGIGIL) threads the bilayer. H267 contacts Fe cation.

This sequence belongs to the reaction center PufL/M/PsbA/D family. In terms of assembly, reaction center is composed of four bacteriochlorophylls, two bacteriopheophytins, two ubiquinones, one iron, and three highly hydrophobic polypeptide chains (designated L, M, and H).

The protein localises to the cell inner membrane. Its function is as follows. The reaction center is a membrane-bound complex that mediates the initial photochemical event in the electron transfer process of photosynthesis. This chain is Reaction center protein M chain (pufM), found in Rubrivivax gelatinosus (strain NBRC 100245 / IL144).